A 496-amino-acid polypeptide reads, in one-letter code: Probable glycine betaine transporter (496 aa).

12 helical membrane-spanning segments follow: residues 11 to 31 (TVLY…VFLP), 49 to 69 (FGWL…GIAI), 89 to 109 (FQWF…FWSV), 136 to 156 (VVFF…GLAL), 188 to 208 (AIDI…LGLG), 219 to 239 (IWGI…ITVI), 260 to 280 (VWLS…VFIL), 306 to 326 (WVGG…PFVG), 341 to 361 (FVFA…AIYG), 396 to 416 (LYAI…VGAA), 441 to 461 (FWGI…GTAA), and 468 to 488 (ASIA…YSIL).

Belongs to the BCCT transporter (TC 2.A.15) family.

It is found in the cell membrane. Functionally, probably acts in the uptake of glycine betaine. May function in the pathway that allows anaerobic methylotrophic growth of D.hafniense using glycine betaine. In Desulfitobacterium hafniense (strain Y51), this protein is Probable glycine betaine transporter.